A 154-amino-acid polypeptide reads, in one-letter code: 6,7-dimethyl-8-ribityllumazine synthase (154 aa).

5-amino-6-(D-ribitylamino)uracil contacts are provided by residues phenylalanine 22, alanine 56–glutamate 58, and threonine 80–isoleucine 82. Serine 85–threonine 86 is a binding site for (2S)-2-hydroxy-3-oxobutyl phosphate. Residue histidine 88 is the Proton donor of the active site. Phenylalanine 113 provides a ligand contact to 5-amino-6-(D-ribitylamino)uracil. Position 127 (arginine 127) interacts with (2S)-2-hydroxy-3-oxobutyl phosphate.

This sequence belongs to the DMRL synthase family.

It catalyses the reaction (2S)-2-hydroxy-3-oxobutyl phosphate + 5-amino-6-(D-ribitylamino)uracil = 6,7-dimethyl-8-(1-D-ribityl)lumazine + phosphate + 2 H2O + H(+). Its pathway is cofactor biosynthesis; riboflavin biosynthesis; riboflavin from 2-hydroxy-3-oxobutyl phosphate and 5-amino-6-(D-ribitylamino)uracil: step 1/2. Functionally, catalyzes the formation of 6,7-dimethyl-8-ribityllumazine by condensation of 5-amino-6-(D-ribitylamino)uracil with 3,4-dihydroxy-2-butanone 4-phosphate. This is the penultimate step in the biosynthesis of riboflavin. The sequence is that of 6,7-dimethyl-8-ribityllumazine synthase from Lactococcus lactis subsp. cremoris (strain MG1363).